A 253-amino-acid polypeptide reads, in one-letter code: Ribosomal RNA small subunit methyltransferase J (253 aa).

S-adenosyl-L-methionine contacts are provided by residues 123–124 (ER) and aspartate 176.

It belongs to the methyltransferase superfamily. RsmJ family.

Its subcellular location is the cytoplasm. The catalysed reaction is guanosine(1516) in 16S rRNA + S-adenosyl-L-methionine = N(2)-methylguanosine(1516) in 16S rRNA + S-adenosyl-L-homocysteine + H(+). Specifically methylates the guanosine in position 1516 of 16S rRNA. The chain is Ribosomal RNA small subunit methyltransferase J from Magnetococcus marinus (strain ATCC BAA-1437 / JCM 17883 / MC-1).